The following is a 352-amino-acid chain: C-C chemokine receptor type 5 (352 aa).

Over 1 to 30 (MVYQVSSPTYDIDYYTSEPCQKINVKQIAA) the chain is Extracellular. Position 3 is a sulfotyrosine (Y3). 2 O-linked (GalNAc...) serine glycosylation sites follow: S6 and S7. Sulfotyrosine is present on residues Y10, Y14, and Y15. 2 cysteine pairs are disulfide-bonded: C20–C269 and C101–C178. Residues 31-58 (RLLPPLYSLVFIFGFVGNILVVLILINC) form a helical membrane-spanning segment. The Cytoplasmic portion of the chain corresponds to 59–68 (KRLKSMTDIY). The helical transmembrane segment at 69–89 (LLNLAISDLLFLLTIPFWAHY) threads the bilayer. Over 90-102 (AAAQWDFGNTMCQ) the chain is Extracellular. Residues 103–124 (LLTGLYLIGFFSGIFFIILLTI) form a helical membrane-spanning segment. At 125–141 (DRYLAIVHAVFALKART) the chain is on the cytoplasmic side. Residues 142–166 (VTFGLVTSVITWVVAVFASLPGIIF) form a helical membrane-spanning segment. Over 167-198 (TRSQREGLHYTCSSHFPSSQYQFWKNFQTLKI) the chain is Extracellular. Residues 199-218 (VILGLVLPLLVMVICYSGIL) form a helical membrane-spanning segment. Topologically, residues 219 to 235 (KTLLRCRNEKKRHRAVR) are cytoplasmic. Residues 236–260 (LIFTIMIVYFLFWAPYNIVLLLNTF) traverse the membrane as a helical segment. Over 261-277 (QEFFGLNNCSSSNRLDQ) the chain is Extracellular. Residues 278–301 (AMQVTETLGMTHCCINPIIYAFVG) traverse the membrane as a helical segment. Topologically, residues 302–352 (EKFRNYLLVFFQKHLAKRFCKCCSISQQEAPERASSVYTRSTGEQETTVGL) are cytoplasmic. 3 S-palmitoyl cysteine lipidation sites follow: C321, C323, and C324. 3 positions are modified to phosphoserine; by BARK1: S336, S337, and S342.

Belongs to the G-protein coupled receptor 1 family. In terms of assembly, interacts with PRAF2. Efficient ligand binding to CCL3/MIP-1alpha and CCL4/MIP-1beta requires sulfation, O-glycosylation and sialic acid modifications. Glycosylation on Ser-6 is required for efficient binding of CCL4. Interacts with GRK2. Interacts with ARRB1 and ARRB2. Interacts with CNIH4. Interacts with S100A4; this interaction stimulates T-lymphocyte chemotaxis. In terms of processing, sulfated on at least 2 of the N-terminal tyrosines. Sulfation is required for efficient binding of the chemokines, CCL3 and CCL4. Palmitoylation in the C-terminal is important for cell surface expression. Post-translationally, phosphorylation on serine residues in the C-terminal is stimulated by binding CC chemokines especially by APO-RANTES. In terms of processing, O-glycosylated, but not N-glycosylated. Ser-6 appears to be the major site even if Ser-7 may be also O-glycosylated. Also sialylated glycans present which contribute to chemokine binding. Thr-16 and Ser-17 may also be glycosylated and, if so, with small moieties such as a T-antigen.

It localises to the cell membrane. In terms of biological role, receptor for a number of inflammatory CC-chemokines including CCL3/MIP-1-alpha, CCL4/MIP-1-beta and RANTES and subsequently transduces a signal by increasing the intracellular calcium ion level. May play a role in the control of granulocytic lineage proliferation or differentiation. Participates in T-lymphocyte migration to the infection site by acting as a chemotactic receptor. In Allochrocebus solatus (Sun-tailed monkey), this protein is C-C chemokine receptor type 5 (CCR5).